A 404-amino-acid chain; its full sequence is Tryptophan synthase beta chain (404 aa).

Lys-98 carries the post-translational modification N6-(pyridoxal phosphate)lysine.

The protein belongs to the TrpB family. In terms of assembly, tetramer of two alpha and two beta chains. Pyridoxal 5'-phosphate is required as a cofactor.

It carries out the reaction (1S,2R)-1-C-(indol-3-yl)glycerol 3-phosphate + L-serine = D-glyceraldehyde 3-phosphate + L-tryptophan + H2O. Its pathway is amino-acid biosynthesis; L-tryptophan biosynthesis; L-tryptophan from chorismate: step 5/5. Its function is as follows. The beta subunit is responsible for the synthesis of L-tryptophan from indole and L-serine. The sequence is that of Tryptophan synthase beta chain from Rhodopseudomonas palustris (strain HaA2).